A 148-amino-acid chain; its full sequence is Nucleoside diphosphate kinase (148 aa).

Residues Lys-9, Phe-57, Arg-85, Thr-91, Arg-102, and Asn-112 each contribute to the ATP site. His-115 serves as the catalytic Pros-phosphohistidine intermediate.

Belongs to the NDK family. Requires Mg(2+) as cofactor.

It catalyses the reaction a 2'-deoxyribonucleoside 5'-diphosphate + ATP = a 2'-deoxyribonucleoside 5'-triphosphate + ADP. The catalysed reaction is a ribonucleoside 5'-diphosphate + ATP = a ribonucleoside 5'-triphosphate + ADP. Major role in the synthesis of nucleoside triphosphates other than ATP. The ATP gamma phosphate is transferred to the NDP beta phosphate via a ping-pong mechanism, using a phosphorylated active-site intermediate. In Helianthus annuus (Common sunflower), this protein is Nucleoside diphosphate kinase.